Here is a 657-residue protein sequence, read N- to C-terminus: Hemocyanin A chain (657 aa).

Cys93 and Cys98 are disulfide-bonded. Asn167 is a glycosylation site (N-linked (GlcNAc...) asparagine). Residues His194, His198, His224, His344, His348, and His384 each contribute to the Cu cation site. Disulfide bonds link Cys483–Cys502 and Cys562–Cys609. The interval 594-616 (EGHNGGHDYGGTHAQCGVHGEAY) is disordered.

This sequence belongs to the tyrosinase family. Hemocyanin subfamily. Hexamer of a number of different chains, of which A, B, and C have been identified. In terms of tissue distribution, hemolymph.

It is found in the secreted. Its subcellular location is the extracellular space. In terms of biological role, hemocyanins are copper-containing oxygen carriers occurring freely dissolved in the hemolymph of many mollusks and arthropods. The protein is Hemocyanin A chain of Panulirus interruptus (California spiny lobster).